The primary structure comprises 456 residues: Bifunctional protein GlmU (456 aa).

Positions Met1 to Arg230 are pyrophosphorylase. UDP-N-acetyl-alpha-D-glucosamine-binding positions include Leu9–Gly12, Lys23, Gln73, and Gly78–Thr79. Residue Asp103 coordinates Mg(2+). Positions 140, 155, 170, and 228 each coordinate UDP-N-acetyl-alpha-D-glucosamine. Asn228 contributes to the Mg(2+) binding site. The linker stretch occupies residues Val231 to Asn251. The segment at Gly252–Lys456 is N-acetyltransferase. Residues Arg333 and Lys351 each contribute to the UDP-N-acetyl-alpha-D-glucosamine site. His363 (proton acceptor) is an active-site residue. Tyr366 and Asn377 together coordinate UDP-N-acetyl-alpha-D-glucosamine. Acetyl-CoA-binding positions include Asn386–Tyr387, Ala423, and Arg440.

The protein in the N-terminal section; belongs to the N-acetylglucosamine-1-phosphate uridyltransferase family. It in the C-terminal section; belongs to the transferase hexapeptide repeat family. In terms of assembly, homotrimer. The cofactor is Mg(2+).

Its subcellular location is the cytoplasm. The catalysed reaction is alpha-D-glucosamine 1-phosphate + acetyl-CoA = N-acetyl-alpha-D-glucosamine 1-phosphate + CoA + H(+). It catalyses the reaction N-acetyl-alpha-D-glucosamine 1-phosphate + UTP + H(+) = UDP-N-acetyl-alpha-D-glucosamine + diphosphate. It participates in nucleotide-sugar biosynthesis; UDP-N-acetyl-alpha-D-glucosamine biosynthesis; N-acetyl-alpha-D-glucosamine 1-phosphate from alpha-D-glucosamine 6-phosphate (route II): step 2/2. Its pathway is nucleotide-sugar biosynthesis; UDP-N-acetyl-alpha-D-glucosamine biosynthesis; UDP-N-acetyl-alpha-D-glucosamine from N-acetyl-alpha-D-glucosamine 1-phosphate: step 1/1. It functions in the pathway bacterial outer membrane biogenesis; LPS lipid A biosynthesis. Its function is as follows. Catalyzes the last two sequential reactions in the de novo biosynthetic pathway for UDP-N-acetylglucosamine (UDP-GlcNAc). The C-terminal domain catalyzes the transfer of acetyl group from acetyl coenzyme A to glucosamine-1-phosphate (GlcN-1-P) to produce N-acetylglucosamine-1-phosphate (GlcNAc-1-P), which is converted into UDP-GlcNAc by the transfer of uridine 5-monophosphate (from uridine 5-triphosphate), a reaction catalyzed by the N-terminal domain. The protein is Bifunctional protein GlmU of Bacillus velezensis (strain DSM 23117 / BGSC 10A6 / LMG 26770 / FZB42) (Bacillus amyloliquefaciens subsp. plantarum).